A 906-amino-acid polypeptide reads, in one-letter code: Ankyrin repeat and MYND domain-containing protein 1 (906 aa).

MORN repeat units lie at residues Tyr16–Ser38, Phe39–Met59, and Phe61–Gln83. The stretch at Lys282–Lys311 is one ANK 1 repeat. The span at Ser391–Met400 shows a compositional bias: polar residues. Positions Ser391–Thr411 are disordered. 6 ANK repeats span residues Val479–Leu508, Val511–Ile540, Gln547–Ala579, Gly623–Val657, Ser660–Leu689, and Val701–Asn732. The Zn(2+) site is built by Cys845, Cys848, Cys859, Cys862, Cys868, Cys872, His881, and Cys885. An MYND-type zinc finger spans residues Cys845–Cys885.

This is Ankyrin repeat and MYND domain-containing protein 1 (Ankmy1) from Mus musculus (Mouse).